The sequence spans 110 residues: Large ribosomal subunit protein uL22 (110 aa).

The protein belongs to the universal ribosomal protein uL22 family. In terms of assembly, part of the 50S ribosomal subunit.

Its function is as follows. This protein binds specifically to 23S rRNA; its binding is stimulated by other ribosomal proteins, e.g. L4, L17, and L20. It is important during the early stages of 50S assembly. It makes multiple contacts with different domains of the 23S rRNA in the assembled 50S subunit and ribosome. In terms of biological role, the globular domain of the protein is located near the polypeptide exit tunnel on the outside of the subunit, while an extended beta-hairpin is found that lines the wall of the exit tunnel in the center of the 70S ribosome. The chain is Large ribosomal subunit protein uL22 from Haemophilus influenzae (strain 86-028NP).